The following is a 183-amino-acid chain: MNQPSKAPRAPRSSAATPKNKKKSRAELDQEAREHKRAKKRRGLASGSRTQVESTNQKNKAAAQAKDPRIGSKVPVALVVEDKPKAKPQPKPKAEAKPKPRLTPEEELAKLENDERLDALLDRIDDGETLSAEDQKYVDQTLDRIDALMEQLGIELGDDDEEEEEKREDILKLLKGGNPKDVI.

The segment covering 1–18 has biased composition (low complexity); the sequence is MNQPSKAPRAPRSSAATP. Residues 1–114 are disordered; that stretch reads MNQPSKAPRA…EEELAKLEND (114 aa). Residues 25–34 are compositionally biased toward basic and acidic residues; the sequence is RAELDQEARE. A compositionally biased stretch (low complexity) spans 56–65; it reads NQKNKAAAQA. Basic and acidic residues predominate over residues 92–114; that stretch reads PKAEAKPKPRLTPEEELAKLEND.

This sequence belongs to the YihI family. In terms of assembly, interacts with Der.

Its function is as follows. A GTPase-activating protein (GAP) that modifies Der/EngA GTPase function. May play a role in ribosome biogenesis. The chain is Der GTPase-activating protein YihI from Serratia proteamaculans (strain 568).